A 210-amino-acid polypeptide reads, in one-letter code: Actin-related protein 3C (210 aa).

An N-terminal signal peptide occupies residues 1-21 (MFESFNVPGLYIAVQAVLALA).

This sequence belongs to the actin family. As to expression, expressed in kidney, stomach, spleen, bone marrow, uterus, testis, placenta, skeletal muscle, mammary gland, lung, fetal liver, and fetal kidney, but not detected in small intestine, brain, and thymus. Expressed in low-metastatic lung adenocarcinoma cells but not in high-metastatic ones.

Functionally, may play a role in the suppression of metastatic potential in lung adenoma carcinoma cells. The chain is Actin-related protein 3C (ACTR3C) from Homo sapiens (Human).